Consider the following 84-residue polypeptide: Omega-conotoxin-like ArMKLT1-02 (84 aa).

The signal sequence occupies residues 1–22 (MKVTCMMIVAVLFLTAWTFVTA). Residues 23–51 (DDSISALEDLFAKAHDKMENSEASPLNER) constitute a propeptide that is removed on maturation. Intrachain disulfides connect Cys-53/Cys-71, Cys-60/Cys-75, and Cys-70/Cys-79.

It belongs to the conotoxin O1 superfamily. In terms of tissue distribution, expressed by the venom duct.

The protein resides in the secreted. Functionally, omega-conotoxins act at presynaptic membranes, they bind and block voltage-gated calcium channels (Cav). The polypeptide is Omega-conotoxin-like ArMKLT1-02 (Conus arenatus (Sand-dusted cone)).